A 604-amino-acid chain; its full sequence is Afamin (604 aa).

The first 21 residues, 1–21 (MKQLKLTGFVIFFFFLTESLT), serve as a signal peptide directing secretion. 3 Albumin domains span residues 22–210 (LPTQ…EPFI), 211–403 (YYLK…RFNE), and 404–598 (TTEK…PKLA). 17 disulfide bridges follow: cysteine 77–cysteine 86, cysteine 99–cysteine 114, cysteine 113–cysteine 124, cysteine 148–cysteine 193, cysteine 192–cysteine 201, cysteine 224–cysteine 270, cysteine 269–cysteine 277, cysteine 289–cysteine 303, cysteine 302–cysteine 313, cysteine 340–cysteine 385, cysteine 384–cysteine 393, cysteine 416–cysteine 462, cysteine 461–cysteine 470, cysteine 483–cysteine 499, cysteine 498–cysteine 509, cysteine 536–cysteine 581, and cysteine 580–cysteine 589. Asparagine 109 carries an N-linked (GlcNAc...) asparagine glycan. Positions 215–319 (ALSSYQKNAC…RGECIIYSNK (105 aa)) are binding pocket for hydrophobic ligands. N-linked (GlcNAc...) asparagine glycosylation is present at asparagine 434.

The protein belongs to the ALB/AFP/VDB family. As to quaternary structure, forms a 1:1 complex with Wnt family members; interacts with WNT3A and WNT5A. Interacts with WNT1, WNT2B, WNT3, WNT7A, WNT7B, WNT8, WNT9A, WNT9B, WNT10A and WNT10B. In terms of processing, N-glycosylated; more than 90% of the glycans are sialylated.

The protein resides in the secreted. In terms of biological role, functions as a carrier for hydrophobic molecules in body fluids. Essential for the solubility and activity of lipidated Wnt family members, including WNT1, WNT2B, WNT3, WNT3A, WNT5A, WNT7A, WNT7B, WNT8, WNT9A, WNT9B, WNT10A and WNT10B. Binds vitamin E. May transport vitamin E in body fluids under conditions where the lipoprotein system is not sufficient. May be involved in the transport of vitamin E across the blood-brain barrier. This chain is Afamin (AFM), found in Bos taurus (Bovine).